Consider the following 288-residue polypeptide: MSSSMWYIMQSIQSKYSLSERLIRTIAAIRSFPHDNVEDLIRGGADVNCTHGTLKPLHCACMVSDADCVELLLEKGAEVNALDGYNRTALHYAAEKDEACVEVLLEYGANPNALDGNRDTPLHWAAFKNNAECVRALLESGASVNALDYNNDTPLSWAAMKGNLESVSILLDYGAEVRVINLIGQTPISRLVALLVRGLGTEKEDSCFELLHRAVGHFELRKNGTMPREVARDPQLCEKLTVLCSAPGTLKTLARYAVRRSLGLQYLPDAVKGLPLPASLKEYLLLLE.

At Ser-17 the chain carries Phosphoserine. 4 ANK repeats span residues 52-81 (GTLK…EVNA), 85-113 (YNRT…NPNA), 117-146 (NRDT…SVNA), and 150-179 (NNDT…EVRV). Residues 235–288 (QLCEKLTVLCSAPGTLKTLARYAVRRSLGLQYLPDAVKGLPLPASLKEYLLLLE) enclose the SOCS box domain.

It belongs to the ankyrin SOCS box (ASB) family. Interacts with TBK1; this interaction promotes TBK1 proteasomal degradation. In terms of processing, phosphorylated by TBK1. In terms of tissue distribution, highest level of expression in skeletal muscle. Also expressed in heart, brain, placenta, liver, kidney and pancreas.

The protein resides in the cytoplasm. It functions in the pathway protein modification; protein ubiquitination. Its function is as follows. May be a substrate-recognition component of a SCF-like ECS (Elongin-Cullin-SOCS-box protein) E3 ubiquitin-protein ligase complex which mediates the ubiquitination and subsequent proteasomal degradation of target proteins. Inhibits IFN-beta production through the IRF3 signaling pathway by targeting TBK1 via 'Lys-48'-linked ubiquitination, leading to its proteasomal degradation. The polypeptide is Ankyrin repeat and SOCS box protein 8 (ASB8) (Homo sapiens (Human)).